The sequence spans 457 residues: Bifunctional protein GlmU (457 aa).

The tract at residues 1–230 is pyrophosphorylase; the sequence is MPLSLPLHIV…AREVEGVNDL (230 aa). UDP-N-acetyl-alpha-D-glucosamine contacts are provided by residues 12 to 15, Lys26, Gln78, 83 to 84, 105 to 107, Gly140, Glu155, Asn170, and Asn228; these read LAAG, GT, and YGD. Asp107 provides a ligand contact to Mg(2+). Asn228 lines the Mg(2+) pocket. The tract at residues 231–251 is linker; it reads WQLTQLERAWQIRAARALCLQ. Positions 252 to 457 are N-acetyltransferase; it reads GARVADPARL…DSWQRPKKKT (206 aa). UDP-N-acetyl-alpha-D-glucosamine-binding residues include Arg334 and Lys352. His364 serves as the catalytic Proton acceptor. UDP-N-acetyl-alpha-D-glucosamine is bound by residues Tyr367 and Asn378. Residues Ala381, 387–388, Ser406, Ala424, and Arg441 each bind acetyl-CoA; that span reads NY.

In the N-terminal section; belongs to the N-acetylglucosamine-1-phosphate uridyltransferase family. This sequence in the C-terminal section; belongs to the transferase hexapeptide repeat family. In terms of assembly, homotrimer. Mg(2+) is required as a cofactor.

It is found in the cytoplasm. It carries out the reaction alpha-D-glucosamine 1-phosphate + acetyl-CoA = N-acetyl-alpha-D-glucosamine 1-phosphate + CoA + H(+). The catalysed reaction is N-acetyl-alpha-D-glucosamine 1-phosphate + UTP + H(+) = UDP-N-acetyl-alpha-D-glucosamine + diphosphate. It functions in the pathway nucleotide-sugar biosynthesis; UDP-N-acetyl-alpha-D-glucosamine biosynthesis; N-acetyl-alpha-D-glucosamine 1-phosphate from alpha-D-glucosamine 6-phosphate (route II): step 2/2. The protein operates within nucleotide-sugar biosynthesis; UDP-N-acetyl-alpha-D-glucosamine biosynthesis; UDP-N-acetyl-alpha-D-glucosamine from N-acetyl-alpha-D-glucosamine 1-phosphate: step 1/1. Its pathway is bacterial outer membrane biogenesis; LPS lipid A biosynthesis. Its function is as follows. Catalyzes the last two sequential reactions in the de novo biosynthetic pathway for UDP-N-acetylglucosamine (UDP-GlcNAc). The C-terminal domain catalyzes the transfer of acetyl group from acetyl coenzyme A to glucosamine-1-phosphate (GlcN-1-P) to produce N-acetylglucosamine-1-phosphate (GlcNAc-1-P), which is converted into UDP-GlcNAc by the transfer of uridine 5-monophosphate (from uridine 5-triphosphate), a reaction catalyzed by the N-terminal domain. The chain is Bifunctional protein GlmU from Xylella fastidiosa (strain 9a5c).